The sequence spans 178 residues: N-alpha-acetyltransferase 80 (178 aa).

One can recognise an N-acetyltransferase domain in the interval 26–178 (VPIHNYPELM…AKKKYMKKVL (153 aa)). Substrate-binding positions include R48, 53–56 (RMRS), N88, and S98. Residues 99–101 (VVV) and 107–112 (GQGFGK) each bind acetyl-CoA. Position 134 (S134) interacts with substrate. Q138 lines the acetyl-CoA pocket.

It belongs to the acetyltransferase family.

It catalyses the reaction N-terminal L-aspartyl-L-aspartyl-L-aspartyl-[protein] + acetyl-CoA = N-terminal N-acetyl-L-aspartyl-L-aspartyl-L-aspartyl-[protein] + CoA + H(+). It carries out the reaction N-terminal L-glutamyl-L-glutamyl-L-glutamyl-[protein] + acetyl-CoA = N-terminal N-acetyl-L-glutamyl-L-glutamyl-L-glutamyl-[protein] + CoA + H(+). Functionally, N-alpha-acetyltransferase that acetylates the amino terminal acidic residue of proteins devoid of initiator methionine. Preferentially acts on proteins starting with Asp-Asp-Asp and Glu-Glu-Glu sequences. In vitro, shows high activity towards N-terminal sequences starting with Met-Asp-Glu-Leu, Met-Glu-Glu-Glu and Met-Asp-Asp-Asp. The protein is N-alpha-acetyltransferase 80 of Drosophila melanogaster (Fruit fly).